The sequence spans 164 residues: Lipoprotein signal peptidase (164 aa).

A run of 4 helical transmembrane segments spans residues 8 to 28 (IVAAVAALIADQASKLWLLFV), 39 to 59 (VTPFFDLVLAWNTGISYGWFQ), 64 to 84 (VGATILLAIKAGAVVLLAIWM), and 91 to 111 (LATIGLGLIIGGAIGNAIDRF). Active-site residues include Asp118 and Asp140. Residues 131-151 (YSWYVFNLADVAIVAGVIALL) traverse the membrane as a helical segment.

The protein belongs to the peptidase A8 family.

It is found in the cell inner membrane. The catalysed reaction is Release of signal peptides from bacterial membrane prolipoproteins. Hydrolyzes -Xaa-Yaa-Zaa-|-(S,diacylglyceryl)Cys-, in which Xaa is hydrophobic (preferably Leu), and Yaa (Ala or Ser) and Zaa (Gly or Ala) have small, neutral side chains.. The protein operates within protein modification; lipoprotein biosynthesis (signal peptide cleavage). Its function is as follows. This protein specifically catalyzes the removal of signal peptides from prolipoproteins. This Nitrobacter hamburgensis (strain DSM 10229 / NCIMB 13809 / X14) protein is Lipoprotein signal peptidase.